The sequence spans 144 residues: Bacilliredoxin BT9727_3899 (144 aa).

This sequence belongs to the bacilliredoxin family.

The protein is Bacilliredoxin BT9727_3899 of Bacillus thuringiensis subsp. konkukian (strain 97-27).